Reading from the N-terminus, the 719-residue chain is Potassium-transporting ATPase ATP-binding subunit (719 aa).

4 helical membrane passes run 35-55 (LFVV…PGLF), 62-82 (VYYA…NYAE), 228-248 (ILLS…FFFG), and 254-274 (FVGG…VALM). The active-site 4-aspartylphosphate intermediate is the Asp-318. Residues Asp-355 and Glu-359 each contribute to the ATP site. A disordered region spans residues 372-396 (GKVQTDGGQSASEELDEPGDSVDAP). The segment covering 373 to 383 (KVQTDGGQSAS) has biased composition (polar residues). ATP is bound by residues 416-423 (FSAETRMS) and Lys-435. 2 residues coordinate Mg(2+): Asp-554 and Asp-558. Helical transmembrane passes span 624-644 (FVLL…MDIL), 652-672 (AVTA…PLAL), and 698-718 (LIAP…LGVF).

Belongs to the cation transport ATPase (P-type) (TC 3.A.3) family. Type IA subfamily. In terms of assembly, the system is composed of three essential subunits: KdpA, KdpB and KdpC. The complex also contains KdpF, a small non-essential subunit.

It localises to the cell membrane. It carries out the reaction K(+)(out) + ATP + H2O = K(+)(in) + ADP + phosphate + H(+). Part of the high-affinity ATP-driven potassium transport (or Kdp) system, which catalyzes the hydrolysis of ATP coupled with the electrogenic transport of potassium into the cytoplasm. This subunit is responsible for energy coupling to the transport system and for the release of the potassium ions to the cytoplasm. The Kdp system is essential for growth under K(+) limitation, and for survival under desiccation and salt crystal inclusion. In Halobacterium salinarum (strain ATCC 29341 / DSM 671 / R1), this protein is Potassium-transporting ATPase ATP-binding subunit.